Reading from the N-terminus, the 121-residue chain is Holo-[acyl-carrier-protein] synthase (121 aa).

The Mg(2+) site is built by Asp8 and Glu58.

It belongs to the P-Pant transferase superfamily. AcpS family. The cofactor is Mg(2+).

The protein resides in the cytoplasm. The catalysed reaction is apo-[ACP] + CoA = holo-[ACP] + adenosine 3',5'-bisphosphate + H(+). Transfers the 4'-phosphopantetheine moiety from coenzyme A to a Ser of acyl-carrier-protein. This is Holo-[acyl-carrier-protein] synthase from Bacillus pumilus (strain SAFR-032).